We begin with the raw amino-acid sequence, 921 residues long: Isoleucine--tRNA ligase (921 aa).

The short motif at 57 to 67 (PYANGDIHMGH) is the 'HIGH' region element. Glu552 is an L-isoleucyl-5'-AMP binding site. A 'KMSKS' region motif is present at residues 593–597 (KMSKS). ATP is bound at residue Lys596. Zn(2+) contacts are provided by Cys888, Cys891, Cys908, and Cys911.

Belongs to the class-I aminoacyl-tRNA synthetase family. IleS type 1 subfamily. In terms of assembly, monomer. It depends on Zn(2+) as a cofactor.

The protein resides in the cytoplasm. The catalysed reaction is tRNA(Ile) + L-isoleucine + ATP = L-isoleucyl-tRNA(Ile) + AMP + diphosphate. Its function is as follows. Catalyzes the attachment of isoleucine to tRNA(Ile). As IleRS can inadvertently accommodate and process structurally similar amino acids such as valine, to avoid such errors it has two additional distinct tRNA(Ile)-dependent editing activities. One activity is designated as 'pretransfer' editing and involves the hydrolysis of activated Val-AMP. The other activity is designated 'posttransfer' editing and involves deacylation of mischarged Val-tRNA(Ile). The polypeptide is Isoleucine--tRNA ligase (Bacillus anthracis (strain A0248)).